A 91-amino-acid polypeptide reads, in one-letter code: DNA-binding protein HU (91 aa).

The protein belongs to the bacterial histone-like protein family.

Histone-like DNA-binding protein which is capable of wrapping DNA to stabilize it, and thus to prevent its denaturation under extreme environmental conditions. This is DNA-binding protein HU (hup) from Clostridium pasteurianum.